A 931-amino-acid polypeptide reads, in one-letter code: Short transient receptor potential channel 6 (931 aa).

Residues 1-24 (MNQSPAAFGPRRGGSPAVVAGAGA) form a disordered region. Residues 1–406 (MNQSPAAFGP…GLRQQTMAVK (406 aa)) lie on the Cytoplasmic side of the membrane. Positions 13-24 (GGSPAVVAGAGA) are enriched in low complexity. 3 ANK repeats span residues 131–160 (MGQN…LSRV), 162–188 (DALL…FAEG), and 217–246 (HDVT…RIER). Residues 407-427 (FLVVLAVAVGLPFLALVYWFA) form a helical membrane-spanning segment. The Extracellular segment spans residues 428-438 (PCSKMGKIMRG). A helical transmembrane segment spans residues 439-459 (PFMKFVAHAASFTIFLGLLVM). Over 460-487 (NAADRFEGTKILPNETSTDHAKQLFRMK) the chain is Cytoplasmic. The chain crosses the membrane as a helical span at residues 488–508 (TSCFSWMEMLIISWVIGMIWA). Residues 509-521 (ECKEIWTQGPKEY) are Extracellular-facing. A helical transmembrane segment spans residues 522-542 (LFELWNMLDFGMLAIFAASFI). Topologically, residues 543–592 (ARFMAFWHASKAQSIIDANDTLKDLTKVTLGDNVKYYNLARIKWDPSDPQ) are cytoplasmic. Residues 593–613 (IISEGLYAIAVVLSFSRIAYI) form a helical membrane-spanning segment. At 614-636 (LPANESFGPLQISLGRTVKDIFK) the chain is on the extracellular side. N-linked (GlcNAc...) asparagine glycosylation occurs at Asn617. The ANK 4 repeat unit spans residues 618–647 (ESFGPLQISLGRTVKDIFKFMVIFIMVFVA). The chain crosses the membrane as a helical span at residues 637-657 (FMVIFIMVFVAFMIGMFNLYS). At 658–674 (YYIGAKQNEAFTTVEES) the chain is on the cytoplasmic side. A helical transmembrane segment spans residues 675-695 (FKTLFWAIFGLSEVKSVVINY). Over 696 to 706 (NHKFIENIGYV) the chain is Extracellular. The chain crosses the membrane as a helical span at residues 707–727 (LYGVYNVTMVIVLLNMLIAMI). At 728–931 (NSSFQEIEDD…MEPNQEESNR (204 aa)) the chain is on the cytoplasmic side. Position 815 is a phosphoserine (Ser815).

This sequence belongs to the transient receptor (TC 1.A.4) family. STrpC subfamily. TRPC6 sub-subfamily. In terms of assembly, homodimer; forms channel complex. Interacts with MX1 and RNF24. Post-translationally, phosphorylated by FYN, leading to an increase of TRPC6 channel activity.

The protein localises to the cell membrane. The catalysed reaction is Ca(2+)(in) = Ca(2+)(out). Thought to form a receptor-activated non-selective calcium permeant cation channel. Probably is operated by a phosphatidylinositol second messenger system activated by receptor tyrosine kinases or G-protein coupled receptors. Activated by diacylglycerol (DAG) in a membrane-delimited fashion, independently of protein kinase C. Seems not to be activated by intracellular calcium store depletion. The protein is Short transient receptor potential channel 6 of Bos taurus (Bovine).